Consider the following 471-residue polypeptide: 3-isopropylmalate dehydratase large subunit (471 aa).

Cys347, Cys407, and Cys410 together coordinate [4Fe-4S] cluster. The segment at 417 to 443 (TLQPGERSASTSNRNFEGRQGKGGRTH) is disordered.

It belongs to the aconitase/IPM isomerase family. LeuC type 1 subfamily. Heterodimer of LeuC and LeuD. It depends on [4Fe-4S] cluster as a cofactor.

The catalysed reaction is (2R,3S)-3-isopropylmalate = (2S)-2-isopropylmalate. The protein operates within amino-acid biosynthesis; L-leucine biosynthesis; L-leucine from 3-methyl-2-oxobutanoate: step 2/4. Its function is as follows. Catalyzes the isomerization between 2-isopropylmalate and 3-isopropylmalate, via the formation of 2-isopropylmaleate. This chain is 3-isopropylmalate dehydratase large subunit, found in Nocardioides sp. (strain ATCC BAA-499 / JS614).